Here is a 183-residue protein sequence, read N- to C-terminus: MKFSLFFSVFFLAVLHACLSESEIDLEDEEHFMSSDSFLSEIQDESRGKTCIERNKECTNDRHGCCRGKIFKDKCTCVKNGKTEKCVCTQKKWAKIIESYIGDIPALPKPVDDKCVPKHADCSKRKDDCCKGGIFKYQCKCYDMYDDDGEKTDLCGCVSPVEHQAIEGALRIAKKLIGDRWGR.

The N-terminal stretch at 1-20 (MKFSLFFSVFFLAVLHACLS) is a signal peptide. Residues 21–47 (ESEIDLEDEEHFMSSDSFLSEIQDESR) constitute a propeptide that is removed on maturation. The Processing quadruplet motif signature appears at 44–47 (DESR). Disulfide bonds link Cys-51–Cys-66, Cys-58–Cys-75, Cys-65–Cys-88, Cys-77–Cys-86, Cys-115–Cys-130, Cys-122–Cys-139, Cys-129–Cys-157, and Cys-141–Cys-155. Domain repeat units follow at residues 51–77 (CIERNKECTNDRHGCCRGKIFKDKCTC) and 115–141 (CVPKHADCSKRKDDCCKGGIFKYQCKC). Residues 51–141 (CIERNKECTN…GGIFKYQCKC (91 aa)) form a 2 X approximate repeats with cysteine pattern C-C-CC-C-C region. Residues 164–177 (QAIEGALRIAKKLI) are predicted alpha-helix. Tryptophan amide is present on Trp-181.

The protein belongs to the neurotoxin 19 (CSTX) family. Double-CSTX subfamily. Cleavage of the propeptide depends on the processing quadruplet motif (XXXR, with at least one of X being E). As to expression, expressed by the venom gland.

Its subcellular location is the secreted. The protein localises to the target cell membrane. Functionally, spider venom toxin that exhibits cytolytic activity by forming an alpha-helix across the membrane. Lethal to insect larvae. Causes instant paralysis and death in the larvae of the flesh fly (S.carnaria) at doses of 20 ug/g, at doses of less than 10 ug/g causes reversible paralysis. Has cytolytic activity against insect Sf9 cells. Causes stable and irreversible depolarization of fly muscle fibers, leading to contracture at higher toxin concentrations. Destabilizes membranes. This chain is DELTA-miturgitoxin-Cp1a, found in Cheiracanthium punctorium (Yellow sac spider).